Reading from the N-terminus, the 315-residue chain is O-antigen chain rhamnosyltransferase WbaN (315 aa).

This sequence belongs to the glycosyltransferase 2 family.

The enzyme catalyses alpha-D-galactosyl-di-trans,octa-cis-undecaprenyl diphosphate + dTDP-beta-L-rhamnose = alpha-L-rhamnosyl-(1-&gt;3)-alpha-D-galactosyl-1-diphospho-di-trans,octa-cis-undecaprenol + dTDP + H(+). It functions in the pathway bacterial outer membrane biogenesis; LPS O-antigen biosynthesis. In terms of biological role, rhamnosyltransferase involved in the biosynthesis of the repeat unit of the lipopolysaccharide (LPS) O-antigen region. Catalyzes the addition of a rhamnose to the galactosyl-undecaprenyl diphosphate intermediate. In Salmonella anatum, this protein is O-antigen chain rhamnosyltransferase WbaN.